A 107-amino-acid polypeptide reads, in one-letter code: Essential MCU regulator, mitochondrial (107 aa).

The transit peptide at 1 to 47 (MASGAARWLALVRVGSGASRSWLSLRKGGDVSAGRSCSGQSLVPTRS) directs the protein to the mitochondrion. Topologically, residues 48 to 65 (VIVTRSGAILPKPVKMSF) are mitochondrial matrix. The helical transmembrane segment at 66-85 (GLLRVFSIVIPFLYVGTLIS) threads the bilayer. Residues 81–85 (GTLIS) carry the GXXXX[G/A/S] motif. Residues 86 to 107 (KNFAALLEEHDIFVPEDDDDDD) are Mitochondrial intermembrane-facing.

Belongs to the SMDT1/EMRE family. Component of the uniplex complex, composed of MCU, EMRE/SMDT1, MICU1 and MICU2 (or MICU3) in a 4:4:1:1 stoichiometry. The number of EMRE/SMDT1 molecules is hovewer variable, ranging from 1 to 4 copies per uniplex complex, leading to uniplex complexes with distinct gatekeeping profiles. Interacts (via its C-terminal poly-Asp tail) with MCUR1; the interaction is direct. Unprocessed form interacts (via transit peptide) with MAIP1. Undergoes proteolytic degradation in neurons: degraded by AFG3L2 and SPG7 before SMDT1/EMRE assembly with the uniporter complex, limiting the availability of SMDT1/EMRE for MCU assembly and promoting efficient assembly of gatekeeper subunits with MCU.

It localises to the mitochondrion inner membrane. Functionally, essential regulatory subunit of the mitochondrial calcium uniporter complex (uniplex), a complex that mediates calcium uptake into mitochondria. Required to bridge the calcium-sensing proteins MICU1 with the calcium-conducting subunit MCU. Acts by mediating activation of MCU and retention of MICU1 to the MCU pore, in order to ensure tight regulation of the uniplex complex and appropriate responses to intracellular calcium signaling. This Bos taurus (Bovine) protein is Essential MCU regulator, mitochondrial.